A 172-amino-acid polypeptide reads, in one-letter code: Putative defense protein (172 aa).

The first 21 residues, 1-21 (MKLVVAAVLAMAASRWRRLSA), serve as a signal peptide directing secretion. The Reelin domain occupies 22–172 (HGQVPSSTCA…LRQLDNAVAA (151 aa)).

The protein belongs to the insect defense protein family. In terms of tissue distribution, in adults, in hemolymph.

The protein resides in the secreted. Its function is as follows. May have antimicrobial activity. In Locusta migratoria (Migratory locust), this protein is Putative defense protein.